A 581-amino-acid polypeptide reads, in one-letter code: Bestrophin-1 (581 aa).

Over 1–31 the chain is Cytoplasmic; sequence MTVTYSSQVANARLGSFSRLLLCWRGSIYKL. Residue Ala10 participates in Ca(2+) binding. A helical membrane pass occupies residues 32–51; that stretch reads LYGEFLIFLLCYYIIRFIYR. Residues 52-60 lie on the Extracellular side of the membrane; that stretch reads MALTDEQQV. Residues 61–82 traverse the membrane as a helical segment; the sequence is IFEKLTLYCDSYIQLIPISFVL. Topologically, residues 83–237 are cytoplasmic; it reads GFYVTLVVTR…DWISVPLVYT (155 aa). The chain crosses the membrane as a helical span at residues 238 to 255; the sequence is QVVTVAVYSFFLACLVGR. Residues 256 to 274 lie on the Extracellular side of the membrane; that stretch reads QFLNPAKAYPGHEMDLVVP. The chain crosses the membrane as a helical span at residues 275-288; it reads LFTFLQFFFYAGWL. Topologically, residues 289-581 are cytoplasmic; it reads KVAEQLINPF…ALENRDEAHS (293 aa). Ca(2+)-binding residues include Gln293, Asn296, Asp301, and Asp304. A disordered region spans residues 416–440; that stretch reads EGHFHEGHPKNLRGARLDSSDQEDS.

The protein belongs to the anion channel-forming bestrophin (TC 1.A.46) family. Calcium-sensitive chloride channel subfamily. Interacts with YWHAG; this interaction promotes the ligand-gated L-glutamate channel activity leading to the positive regulation of NMDA glutamate receptor activity through the L-glutamate secretion. Post-translationally, phosphorylated (in vitro). In terms of processing, dephosphorylated (in vitro) by PP2A.

Its subcellular location is the cell membrane. The protein localises to the basolateral cell membrane. The catalysed reaction is chloride(in) = chloride(out). The enzyme catalyses hydrogencarbonate(in) = hydrogencarbonate(out). It carries out the reaction 4-aminobutanoate(in) = 4-aminobutanoate(out). It catalyses the reaction L-glutamate(out) = L-glutamate(in). Its function is as follows. Ligand-gated anion channel that allows the movement of anions across cell membranes when activated by calcium (Ca2+). Allows the movement of chloride and hydrogencarbonate. Found in a partially open conformation leading to significantly smaller chloride movement. Upon F2R/PAR-1 activation, the sequestered calcium is released into the cytosol of astrocytes, leading to the (Ca2+)-dependent release of L-glutamate into the synaptic cleft that targets the neuronal postsynaptic GRIN2A/NMDAR receptor resulting in the synaptic plasticity regulation. Upon activation of the norepinephrine-alpha-1 adrenergic receptor signaling pathway, transports as well D-serine than L-glutamate in a (Ca2+)-dependent manner, leading to activation of adjacent NMDAR receptors and therefore regulates the heterosynaptic long-term depression and metaplasticity during initial memory acquisition. Releases the 4-aminobutanoate neurotransmitter in a (Ca2+)-dependent manner, and participates in its tonic release from cerebellar glial cells. This is Bestrophin-1 from Sus scrofa (Pig).